The chain runs to 411 residues: Acetylornithine aminotransferase, mitochondrial (411 aa).

At Lys262 the chain carries N6-(pyridoxal phosphate)lysine.

This sequence belongs to the class-III pyridoxal-phosphate-dependent aminotransferase family. It depends on pyridoxal 5'-phosphate as a cofactor.

It localises to the mitochondrion matrix. The catalysed reaction is N(2)-acetyl-L-ornithine + 2-oxoglutarate = N-acetyl-L-glutamate 5-semialdehyde + L-glutamate. It functions in the pathway amino-acid biosynthesis; L-arginine biosynthesis; N(2)-acetyl-L-ornithine from L-glutamate: step 4/4. The chain is Acetylornithine aminotransferase, mitochondrial (ARG8) from Yarrowia lipolytica (strain CLIB 122 / E 150) (Yeast).